Reading from the N-terminus, the 218-residue chain is Zinc finger CCHC-type and RNA-binding motif-containing protein 1 (218 aa).

In terms of domain architecture, RRM spans 10-88 (STVYVSNLPF…RAIKASIAKD (79 aa)). The segment at 105 to 122 (SRCYECGDTGHLSYACPK) adopts a CCHC-type zinc-finger fold. A disordered region spans residues 119-218 (ACPKNMLGER…YFSDEDELSD (100 aa)). Residues 132 to 188 (QKKEKKKRKRLVEEEEEEVVEEEESEDEGEDPALDSLSQAIAFQQARIDEEKNKYRH) adopt a coiled-coil conformation. The segment covering 144–164 (EEEEEEVVEEEESEDEGEDPA) has biased composition (acidic residues). The span at 178-201 (RIDEEKNKYRHDPAEASTSEDSRR) shows a compositional bias: basic and acidic residues.

As to quaternary structure, component of the U11/U12 snRNPs that are part of the U12-type spliceosome.

The protein resides in the nucleus. The polypeptide is Zinc finger CCHC-type and RNA-binding motif-containing protein 1 (zcrb1) (Xenopus laevis (African clawed frog)).